The primary structure comprises 847 residues: Beta-hexosaminidase (847 aa).

3 disulfides stabilise this stretch: Cys-31-Cys-40, Cys-377-Cys-385, and Cys-484-Cys-530. Glu-519 functions as the Proton donor in the catalytic mechanism.

Belongs to the glycosyl hydrolase 20 family.

The catalysed reaction is Hydrolysis of terminal non-reducing N-acetyl-D-hexosamine residues in N-acetyl-beta-D-hexosaminides.. It functions in the pathway glycan degradation; chitin degradation. Hydrolysis of terminal, non-reducing N-acetyl-beta-D-glucosamine residues in chitobiose and higher analogs, and in glycoproteins. The sequence is that of Beta-hexosaminidase (hex) from Vibrio vulnificus.